Reading from the N-terminus, the 644-residue chain is Coiled-coil domain-containing protein 22 homolog (644 aa).

Positions 316–341 (DEQKAAAMAGLSESGPPKMDTEEELQ) are disordered. Coiled coils occupy residues 333 to 383 (KMDT…NEQV), 409 to 486 (DAEN…GKDD), and 592 to 644 (GVIM…LKSS).

The protein belongs to the CCDC22 family.

The chain is Coiled-coil domain-containing protein 22 homolog from Nematostella vectensis (Starlet sea anemone).